The sequence spans 399 residues: L-methionine gamma-lyase (399 aa).

Pyridoxal 5'-phosphate is bound by residues 59–61 and 89–90; these read YTR and GI. Tyrosine 114 serves as a coordination point for substrate. 209–211 provides a ligand contact to pyridoxal 5'-phosphate; it reads SAT. The residue at position 212 (lysine 212) is an N6-(pyridoxal phosphate)lysine. Residue arginine 376 participates in substrate binding.

Belongs to the trans-sulfuration enzymes family. L-methionine gamma-lyase subfamily. As to quaternary structure, homotetramer; dimer of active dimers. Requires pyridoxal 5'-phosphate as cofactor.

The catalysed reaction is L-methionine + H2O = methanethiol + 2-oxobutanoate + NH4(+). It carries out the reaction L-homocysteine + H2O = 2-oxobutanoate + hydrogen sulfide + NH4(+) + H(+). Catalyzes the alpha,gamma-elimination of L-methionine to produce methanethiol, 2-oxobutanoate and ammonia; methanethiol (methyl mercaptan) is considered to be one of the main causes of the oral malodor in periodontal disease and may also play a role in the pathogenicity of P.gingivalis in that disease. Is also able to catalyze the alpha,gamma-elimination of L-homocysteine. This Porphyromonas gingivalis (strain ATCC BAA-308 / W83) protein is L-methionine gamma-lyase.